The primary structure comprises 256 residues: NH(3)-dependent NAD(+) synthetase (256 aa).

29–36 provides a ligand contact to ATP; that stretch reads GISGGIDS. Residue Asp35 participates in Mg(2+) binding. Arg115 serves as a coordination point for deamido-NAD(+). Position 135 (Thr135) interacts with ATP. Position 140 (Glu140) interacts with Mg(2+). Lys148 and Asp155 together coordinate deamido-NAD(+). ATP is bound by residues Lys164 and Ser186. 245–246 contributes to the deamido-NAD(+) binding site; it reads HK.

Belongs to the NAD synthetase family. As to quaternary structure, homodimer.

It catalyses the reaction deamido-NAD(+) + NH4(+) + ATP = AMP + diphosphate + NAD(+) + H(+). It functions in the pathway cofactor biosynthesis; NAD(+) biosynthesis; NAD(+) from deamido-NAD(+) (ammonia route): step 1/1. Functionally, catalyzes the ATP-dependent amidation of deamido-NAD to form NAD. Uses ammonia as a nitrogen source. The sequence is that of NH(3)-dependent NAD(+) synthetase from Methanosarcina mazei (strain ATCC BAA-159 / DSM 3647 / Goe1 / Go1 / JCM 11833 / OCM 88) (Methanosarcina frisia).